We begin with the raw amino-acid sequence, 158 residues long: Transcription elongation factor GreA (158 aa).

This sequence belongs to the GreA/GreB family.

Necessary for efficient RNA polymerase transcription elongation past template-encoded arresting sites. The arresting sites in DNA have the property of trapping a certain fraction of elongating RNA polymerases that pass through, resulting in locked ternary complexes. Cleavage of the nascent transcript by cleavage factors such as GreA or GreB allows the resumption of elongation from the new 3'terminus. GreA releases sequences of 2 to 3 nucleotides. This is Transcription elongation factor GreA from Rhizobium johnstonii (strain DSM 114642 / LMG 32736 / 3841) (Rhizobium leguminosarum bv. viciae).